The chain runs to 1137 residues: Morphogenesis-related protein MSB1 (1137 aa).

2 disordered regions span residues 1-59 (MNDM…NSMD) and 483-520 (QLKK…LSQT). A compositionally biased stretch (polar residues) spans 21–50 (SNSPKKAQKTNLSPNKNQNNEKNVPRSNGR). At S538 the chain carries Phosphoserine. Disordered regions lie at residues 577–620 (LNNL…EERV), 736–799 (STNT…SDSK), and 814–871 (AVSP…PQFS). Residues 593–608 (FEEKSKDAPIREEYHT) are compositionally biased toward basic and acidic residues. Polar residues predominate over residues 736–749 (STNTNDSCADSSKY). A compositionally biased stretch (basic and acidic residues) spans 750–769 (TADRKLAEPRKISEESKVND). A compositionally biased stretch (polar residues) spans 770–796 (DSSSYYSPNINNLPASRMPSQPTYSNS). S776 and S816 each carry phosphoserine.

Functionally, may play a role in polarity establishment and bud formation. The MSB1 gene may be functionally redundant. This is Morphogenesis-related protein MSB1 (MSB1) from Saccharomyces cerevisiae (strain ATCC 204508 / S288c) (Baker's yeast).